The primary structure comprises 68 residues: MYNPREINIKKDFTIQQKIDPGKVQIIVLDGNQGTAHVLDAPEHGKTVIQTVKGSFARVDHEIGFKVK.

The protein to B.subtilis XtrA.

This is an uncharacterized protein from Bacillus subtilis (strain 168).